Consider the following 519-residue polypeptide: Demethylepipodophyllotoxin synthase (519 aa).

The chain crosses the membrane as a helical span at residues 6–26 (CLETLLLGFFVLLPCFFYFVW). Cys-458 is a heme binding site.

The protein belongs to the cytochrome P450 family. Heme is required as a cofactor. Rhizome-specific expression.

The protein localises to the membrane. It catalyses the reaction (-)-4'-desmethyl-deoxypodophyllotoxin + reduced [NADPH--hemoprotein reductase] + O2 = 4'-demethylepipodophyllotoxin + oxidized [NADPH--hemoprotein reductase] + H2O + H(+). The protein operates within aromatic compound metabolism; phenylpropanoid biosynthesis. Its function is as follows. Cytochrome P450 involved in the biosynthesis of etoposide, a chemotherapeutic compound of the topoisomerase inhibitor family. Catalyzes the hydroxylation of deoxypodophyllotoxin to form epipodophyllotoxin. The chain is Demethylepipodophyllotoxin synthase from Sinopodophyllum hexandrum (Himalayan may apple).